A 390-amino-acid polypeptide reads, in one-letter code: Succinate--CoA ligase [ADP-forming] subunit beta (390 aa).

The region spanning 9-245 is the ATP-grasp domain; it reads KELLSRYGLP…KSQENEREVK (237 aa). ATP is bound by residues lysine 46, 53–55, glutamate 100, tyrosine 103, and glutamate 108; that span reads GRG. Residues asparagine 200 and aspartate 214 each contribute to the Mg(2+) site. Substrate is bound by residues asparagine 265 and 322 to 324; that span reads GIV.

This sequence belongs to the succinate/malate CoA ligase beta subunit family. As to quaternary structure, heterotetramer of two alpha and two beta subunits. Mg(2+) is required as a cofactor.

The enzyme catalyses succinate + ATP + CoA = succinyl-CoA + ADP + phosphate. The catalysed reaction is GTP + succinate + CoA = succinyl-CoA + GDP + phosphate. It participates in carbohydrate metabolism; tricarboxylic acid cycle; succinate from succinyl-CoA (ligase route): step 1/1. In terms of biological role, succinyl-CoA synthetase functions in the citric acid cycle (TCA), coupling the hydrolysis of succinyl-CoA to the synthesis of either ATP or GTP and thus represents the only step of substrate-level phosphorylation in the TCA. The beta subunit provides nucleotide specificity of the enzyme and binds the substrate succinate, while the binding sites for coenzyme A and phosphate are found in the alpha subunit. The sequence is that of Succinate--CoA ligase [ADP-forming] subunit beta from Chromobacterium violaceum (strain ATCC 12472 / DSM 30191 / JCM 1249 / CCUG 213 / NBRC 12614 / NCIMB 9131 / NCTC 9757 / MK).